Here is a 142-residue protein sequence, read N- to C-terminus: Translation initiation factor 2 subunit beta (142 aa).

The protein belongs to the eIF-2-beta/eIF-5 family. As to quaternary structure, heterotrimer composed of an alpha, a beta and a gamma chain.

EIF-2 functions in the early steps of protein synthesis by forming a ternary complex with GTP and initiator tRNA. The sequence is that of Translation initiation factor 2 subunit beta from Thermococcus kodakarensis (strain ATCC BAA-918 / JCM 12380 / KOD1) (Pyrococcus kodakaraensis (strain KOD1)).